The primary structure comprises 251 residues: Cytochrome c oxidase subunit 2 (251 aa).

Residues 1-15 (MLDLLRLQLTTFIMN) constitute a propeptide, removed in mature form. The Mitochondrial intermembrane portion of the chain corresponds to 16–30 (DVPTPYACYFQDSAT). A helical transmembrane segment spans residues 31–64 (PNQEGILELHDNIMFYLLVILGLVSWMLYTIVMT). The Mitochondrial matrix portion of the chain corresponds to 65 to 78 (YSKNPIAYKYIKHG). Residues 79-108 (QTIEVIWTIFPAVILLIIAFPSFILLYLCD) traverse the membrane as a helical segment. Over 109–251 (EVISPAMTIK…PKFLEWLNEQ (143 aa)) the chain is Mitochondrial intermembrane. Cu cation is bound by residues His186, Cys221, Glu223, Cys225, His229, and Met232. Residue Glu223 participates in Mg(2+) binding.

The protein belongs to the cytochrome c oxidase subunit 2 family. As to quaternary structure, component of the cytochrome c oxidase (complex IV, CIV), a multisubunit enzyme composed of 12 subunits. The complex is composed of a catalytic core of 3 subunits COX1, COX2 and COX3, encoded in the mitochondrial DNA, and 9 supernumerary subunits COX4, COX5A (or COX5B), COX6, COX7, COX8, COX9, COX12, COX13 and COX26, which are encoded in the nuclear genome. The complex exists as a monomer or a dimer and forms supercomplexes (SCs) in the inner mitochondrial membrane with a dimer of ubiquinol-cytochrome c oxidoreductase (cytochrome b-c1 complex, complex III, CIII), resulting in 2 different assemblies (supercomplexes III(2)IV and III(2)IV(2)). Cu cation serves as cofactor. The N-terminal sequence of COX2 is processed by IMP1.

It localises to the mitochondrion inner membrane. It carries out the reaction 4 Fe(II)-[cytochrome c] + O2 + 8 H(+)(in) = 4 Fe(III)-[cytochrome c] + 2 H2O + 4 H(+)(out). Its function is as follows. Component of the cytochrome c oxidase, the last enzyme in the mitochondrial electron transport chain which drives oxidative phosphorylation. The respiratory chain contains 3 multisubunit complexes succinate dehydrogenase (complex II, CII), ubiquinol-cytochrome c oxidoreductase (cytochrome b-c1 complex, complex III, CIII) and cytochrome c oxidase (complex IV, CIV), that cooperate to transfer electrons derived from NADH and succinate to molecular oxygen, creating an electrochemical gradient over the inner membrane that drives transmembrane transport and the ATP synthase. Cytochrome c oxidase is the component of the respiratory chain that catalyzes the reduction of oxygen to water. Electrons originating from reduced cytochrome c in the intermembrane space (IMS) are transferred via the dinuclear copper A center (CU(A)) of COX2 and heme A of COX1 to the active site in COX1, a binuclear center (BNC) formed by heme A3 and copper B (CU(B)). The BNC reduces molecular oxygen to 2 water molecules unsing 4 electrons from cytochrome c in the IMS and 4 protons from the mitochondrial matrix. COX2 is a catalytic core subunit which transfers the electrons from cytochrome c via its dinuclear copper A center (CU(A)) to the BNC of the COX1. The protein is Cytochrome c oxidase subunit 2 (COX2) of Saccharomyces cerevisiae (strain ATCC 204508 / S288c) (Baker's yeast).